The sequence spans 164 residues: Sorting nexin-3 (164 aa).

In terms of domain architecture, PX spans Glu40–Gln163. Residues Arg83, Ser85, Lys114, Arg120, and Arg129 each coordinate a 1,2-diacyl-sn-glycero-3-phospho-(1D-myo-inositol-3-phosphate).

It belongs to the sorting nexin family.

The protein resides in the cytoplasm. It is found in the golgi apparatus membrane. The protein localises to the prevacuolar compartment membrane. Required for retention of late Golgi membrane proteins. Component of the retrieval machinery that functions by direct interaction with the cytosolic tails of certain TGN membrane proteins during the sorting/budding process at the prevacuolar compartment. Binds phosphatidylinositol 3-phosphate (PtdIns(P3)). This chain is Sorting nexin-3 (SNX3), found in Kluyveromyces lactis (strain ATCC 8585 / CBS 2359 / DSM 70799 / NBRC 1267 / NRRL Y-1140 / WM37) (Yeast).